Consider the following 414-residue polypeptide: Putative competence-damage inducible protein (414 aa).

The protein belongs to the CinA family.

This Clostridium novyi (strain NT) protein is Putative competence-damage inducible protein.